Here is a 209-residue protein sequence, read N- to C-terminus: Thymidine kinase (209 aa).

ATP-binding positions include 16 to 23 and 90 to 93; these read GPMFAGKT and DEAQ. The active-site Proton acceptor is Glu91.

It belongs to the thymidine kinase family. Homotetramer.

The protein localises to the cytoplasm. The catalysed reaction is thymidine + ATP = dTMP + ADP + H(+). This chain is Thymidine kinase, found in Onion yellows phytoplasma (strain OY-M).